We begin with the raw amino-acid sequence, 204 residues long: Peptidyl-prolyl cis-trans isomerase CYP20-1 (204 aa).

The first 23 residues, 1–23 (MASSVTLLLWSLLLLGTLSAIQA), serve as a signal peptide directing secretion. Residues 38-201 (YFDVEIDGKA…SKVVIVDSGE (164 aa)) enclose the PPIase cyclophilin-type domain.

It belongs to the cyclophilin-type PPIase family. In terms of assembly, interacts with the PP2A A subunit PP2AA1/RCN1. In terms of tissue distribution, ubiquitous, mostly in aerial organs. Higher levels in leaf and buds, and lower levels in seedlings.

The protein resides in the endoplasmic reticulum. It localises to the secreted. The enzyme catalyses [protein]-peptidylproline (omega=180) = [protein]-peptidylproline (omega=0). Binds cyclosporin A (CsA). CsA mediates some of its effects via an inhibitory action on PPIase. Functionally, PPIases accelerate the folding of proteins. It catalyzes the cis-trans isomerization of proline imidic peptide bonds in oligopeptides. Seems to be involved in root development. The protein is Peptidyl-prolyl cis-trans isomerase CYP20-1 (CYP20-1) of Arabidopsis thaliana (Mouse-ear cress).